The primary structure comprises 120 residues: Phosphoribosyl-ATP pyrophosphatase (120 aa).

The tract at residues 97-120 (REGTSGLVEKASRPAKKDSGTADS) is disordered. A compositionally biased stretch (basic and acidic residues) spans 106-120 (KASRPAKKDSGTADS).

The protein belongs to the PRA-PH family.

The protein resides in the cytoplasm. It carries out the reaction 1-(5-phospho-beta-D-ribosyl)-ATP + H2O = 1-(5-phospho-beta-D-ribosyl)-5'-AMP + diphosphate + H(+). Its pathway is amino-acid biosynthesis; L-histidine biosynthesis; L-histidine from 5-phospho-alpha-D-ribose 1-diphosphate: step 2/9. The chain is Phosphoribosyl-ATP pyrophosphatase from Rhodopirellula baltica (strain DSM 10527 / NCIMB 13988 / SH1).